Consider the following 438-residue polypeptide: Proline--tRNA ligase (438 aa).

Belongs to the class-II aminoacyl-tRNA synthetase family. ProS type 2 subfamily. In terms of assembly, homodimer.

Its subcellular location is the cytoplasm. It carries out the reaction tRNA(Pro) + L-proline + ATP = L-prolyl-tRNA(Pro) + AMP + diphosphate. Catalyzes the attachment of proline to tRNA(Pro) in a two-step reaction: proline is first activated by ATP to form Pro-AMP and then transferred to the acceptor end of tRNA(Pro). In Gluconobacter oxydans (strain 621H) (Gluconobacter suboxydans), this protein is Proline--tRNA ligase.